We begin with the raw amino-acid sequence, 274 residues long: Nitrogenase iron protein (274 aa).

Residue 8–15 coordinates ATP; it reads GKGGIGKS. Cysteine 94 lines the [4Fe-4S] cluster pocket. Arginine 97 is subject to ADP-ribosylarginine; by dinitrogenase reductase ADP-ribosyltransferase. Residue cysteine 131 coordinates [4Fe-4S] cluster.

This sequence belongs to the NifH/BchL/ChlL family. In terms of assembly, homodimer. [4Fe-4S] cluster is required as a cofactor. In terms of processing, the reversible ADP-ribosylation of Arg-97 inactivates the nitrogenase reductase and regulates nitrogenase activity.

It carries out the reaction N2 + 8 reduced [2Fe-2S]-[ferredoxin] + 16 ATP + 16 H2O = H2 + 8 oxidized [2Fe-2S]-[ferredoxin] + 2 NH4(+) + 16 ADP + 16 phosphate + 6 H(+). In terms of biological role, the key enzymatic reactions in nitrogen fixation are catalyzed by the nitrogenase complex, which has 2 components: the iron protein and the molybdenum-iron protein. This chain is Nitrogenase iron protein, found in Pelodictyon phaeoclathratiforme (strain DSM 5477 / BU-1).